Here is a 514-residue protein sequence, read N- to C-terminus: 2,3-bisphosphoglycerate-independent phosphoglycerate mutase (514 aa).

Positions 14 and 64 each coordinate Mn(2+). Serine 64 serves as the catalytic Phosphoserine intermediate. Residues histidine 125, 155–156 (RD), arginine 187, arginine 193, 263–266 (RADR), and lysine 336 each bind substrate. The Mn(2+) site is built by aspartate 403, histidine 407, aspartate 444, histidine 445, and histidine 463.

This sequence belongs to the BPG-independent phosphoglycerate mutase family. As to quaternary structure, monomer. Requires Mn(2+) as cofactor.

The enzyme catalyses (2R)-2-phosphoglycerate = (2R)-3-phosphoglycerate. Its pathway is carbohydrate degradation; glycolysis; pyruvate from D-glyceraldehyde 3-phosphate: step 3/5. Its function is as follows. Catalyzes the interconversion of 2-phosphoglycerate and 3-phosphoglycerate. This is 2,3-bisphosphoglycerate-independent phosphoglycerate mutase from Shewanella pealeana (strain ATCC 700345 / ANG-SQ1).